A 118-amino-acid chain; its full sequence is Large ribosomal subunit protein bL19 (118 aa).

It belongs to the bacterial ribosomal protein bL19 family.

In terms of biological role, this protein is located at the 30S-50S ribosomal subunit interface and may play a role in the structure and function of the aminoacyl-tRNA binding site. This Aliarcobacter butzleri (strain RM4018) (Arcobacter butzleri) protein is Large ribosomal subunit protein bL19.